The sequence spans 209 residues: Eukaryotic translation initiation factor 4E (209 aa).

The protein belongs to the eukaryotic initiation factor 4E family. As to quaternary structure, eIF4F is a multi-subunit complex, the composition of which varies with external and internal environmental conditions. It is composed of at least eIF4A, eIF4E and eIF4G. eIF4E is also known to interact with other partners.

Functionally, recognizes and binds the 7-methylguanosine-containing mRNA cap during an early step in the initiation of protein synthesis and facilitates ribosome binding by inducing the unwinding of the mRNAs secondary structures. This is Eukaryotic translation initiation factor 4E (TIF45) from Candida glabrata (strain ATCC 2001 / BCRC 20586 / JCM 3761 / NBRC 0622 / NRRL Y-65 / CBS 138) (Yeast).